An 846-amino-acid chain; its full sequence is MGIQGLLQFIKEASEPIHVRKYKGQVVAVDTYCWLHKGAIACAEKLAKGEPTDRYVGFCMKFVNMLLSHGIKPILVFDGCTLPSKKEVERSRRERRQANLLKGKQLLREGKVSEARECFTRSINITHAMAHKVIKAARSQGVDCLVAPYEADAQLAYLNKAGIVQAIITEDSDLLAFGCKKVILKMDQFGNGLEIDQARLGMCRQLGDVFTEEKFRYMCILSGCDYLSSLRGIGLAKACKVLRLANNPDIVKVIKKIGHYLKMNITVPEDYINGFIRANNTFLYQLVFDPIKRKLIPLNAYEDDVDPETLSYAGQYVDDSIALQIALGNKDINTFEQIDDYNPDTAMPAHSRSHSWDDKTCQKSANVSSIWHRNYSPRPESGTVSDAPQLKENPSTVGVERVISTKGLNLPRKSSIVKRPRSAELSEDDLLSQYSLSFTKKTKKNSSEGNKSLSFSEVFVPDLVNGPTNKKSVSTPPRTRNKFATFLQRKNEESGAVVVPGTRSRFFCSSDSTDCVSNKVSIQPLDETAVTDKENNLHESEYGDQEGKRLVDTDVARNSSDDIPNNHIPGDHIPDKATVFTDEESYSFESSKFTRTISPPTLGTLRSCFSWSGGLGDFSRTPSPSPSTALQQFRRKSDSPTSLPENNMSDVSQLKSEESSDDESHPLREEACSSQSQESGEFSLQSSNASKLSQCSSKDSDSEESDCNIKLLDSQSDQTSKLRLSHFSKKDTPLRNKVPGLYKSSSADSLSTTKIKPLGPARASGLSKKPASIQKRKHHNAENKPGLQIKLNELWKNFGFKKDSEKLPPCKKPLSPVRDNIQLTPEAEEDIFNKPECGRVQRAIFQ.

The segment at 1–99 (MGIQGLLQFI…RSRRERRQAN (99 aa)) is N-domain. 8 residues coordinate Mg(2+): Asp30, Asp78, Glu150, Asp152, Asp171, Asp173, Asp225, and Asp270. Residues 129–387 (MAHKVIKAAR…RPESGTVSDA (259 aa)) are interaction with MSH3. The tract at residues 138-229 (RSQGVDCLVA…ILSGCDYLSS (92 aa)) is I-domain. The tract at residues 372–396 (HRNYSPRPESGTVSDAPQLKENPST) is disordered. Residue Ser376 is modified to Phosphoserine. Residues 382 to 396 (GTVSDAPQLKENPST) show a composition bias toward polar residues. An interaction with MLH1 region spans residues 388–490 (PQLKENPSTV…NKFATFLQRK (103 aa)). The Nuclear localization signal motif lies at 418–421 (KRPR). Residues Ser422 and Ser454 each carry the phosphoserine modification. An N6-acetyllysine modification is found at Lys482. Thr581 bears the Phosphothreonine mark. Phosphoserine is present on residues Ser598 and Ser610. The interval 600–846 (PTLGTLRSCF…CGRVQRAIFQ (247 aa)) is interaction with MSH2. The interval 618–781 (FSRTPSPSPS…SIQKRKHHNA (164 aa)) is disordered. Composition is skewed to polar residues over residues 620–631 (RTPSPSPSTALQ) and 639–654 (SPTSLPENNMSDVSQL). Position 621 is a phosphothreonine (Thr621). Phosphoserine is present on residues Ser623, Ser639, Ser660, and Ser674. A compositionally biased stretch (basic and acidic residues) spans 655–671 (KSEESSDDESHPLREEA). 3 stretches are compositionally biased toward polar residues: residues 672 to 689 (CSSQSQESGEFSLQSSNA), 713 to 722 (DSQSDQTSKL), and 743 to 754 (KSSSADSLSTTK). Residue Ser714 is modified to Phosphoserine; by ATR. Position 746 is a phosphoserine (Ser746). Residues 787-846 (LQIKLNELWKNFGFKKDSEKLPPCKKPLSPVRDNIQLTPEAEEDIFNKPECGRVQRAIFQ) form an interaction with MLH1 region.

This sequence belongs to the XPG/RAD2 endonuclease family. EXO1 subfamily. As to quaternary structure, interacts with the MLH1-PMS2 heterodimer via MLH1. Interacts with MSH3. Interacts with the MSH2-MSH6 heterodimer via MSH2, and this interaction may increase the processivity of the 5'-&gt;3' exonuclease activity. Interacts with PCNA, and this interaction may both stimulate the cryptic 3'-&gt;5' exonuclease activity and suppress the 5'-&gt;3' exonuclease activity. Interacts with WRN, and this interaction stimulates both the 5'-&gt;3' exonuclease activity and cleavage of 5'-overhanging flap structures. Interacts with RECQL/RECQ1, and this interaction stimulates cleavage of 5'-overhanging flap structures. Interacts with DNA helicase ZGRF1; the interaction is increased following DNA damage induction. The cofactor is Mg(2+). In terms of processing, phosphorylated upon DNA damage and in response to agents stalling DNA replication, probably by ATM or ATR. Phosphorylation at Ser-454, Thr-621 and Ser-714 is induced upon DNA-damage caused by treatment with hydroxyurea (HU) but not upon IR treatment. The HU-induced EXO1 triple phosphorylation facilitates destabilization/degradation of the protein. As to expression, highly expressed in bone marrow, testis and thymus. Expressed at lower levels in colon, lymph nodes, ovary, placenta, prostate, small intestine, spleen and stomach.

It is found in the nucleus. 5'-&gt;3' double-stranded DNA exonuclease which may also possess a cryptic 3'-&gt;5' double-stranded DNA exonuclease activity. Functions in DNA mismatch repair (MMR) to excise mismatch-containing DNA tracts directed by strand breaks located either 5' or 3' to the mismatch. Also exhibits endonuclease activity against 5'-overhanging flap structures similar to those generated by displacement synthesis when DNA polymerase encounters the 5'-end of a downstream Okazaki fragment. Required for somatic hypermutation (SHM) and class switch recombination (CSR) of immunoglobulin genes. Essential for male and female meiosis. The polypeptide is Exonuclease 1 (EXO1) (Homo sapiens (Human)).